Consider the following 207-residue polypeptide: Ribosome maturation factor RimP (207 aa).

Residues 171-207 (RAPGGAPEEGEEDTTEAAPEGAGKSPKPGRRPARKTH) form a disordered region. Positions 197 to 207 (KPGRRPARKTH) are enriched in basic residues.

The protein belongs to the RimP family.

Its subcellular location is the cytoplasm. In terms of biological role, required for maturation of 30S ribosomal subunits. The chain is Ribosome maturation factor RimP from Gluconacetobacter diazotrophicus (strain ATCC 49037 / DSM 5601 / CCUG 37298 / CIP 103539 / LMG 7603 / PAl5).